A 470-amino-acid polypeptide reads, in one-letter code: Calcium-binding and coiled-coil domain-containing protein 2 (470 aa).

Residues 131–134 carry the CLIR motif; it reads ILLV. Residues 132 to 368 adopt a coiled-coil conformation; it reads LLVTTEEEAQ…QMEDLSYTLE (237 aa). The short motif at 201 to 204 is the LIR-like element; that stretch reads QQNQ. The segment at 441 to 464 adopts a UBZ1-type zinc-finger fold; that stretch reads QMQCPECGSEFENFQVFQDHIFCH. The Zn(2+) site is built by Cys-444, Cys-447, His-460, and His-464.

This sequence belongs to the CALCOCO family.

Its subcellular location is the cytoplasm. It is found in the perinuclear region. The protein localises to the cytoskeleton. It localises to the cytoplasmic vesicle. The protein resides in the autophagosome membrane. Xenophagy-specific receptor required for autophagy-mediated intracellular bacteria degradation. Acts as an effector protein of galectin-sensed membrane damage that restricts the proliferation of infecting pathogens upon entry into the cytosol by targeting galectin-associated bacteria for autophagy. Initially orchestrates bacteria targeting to autophagosomes and subsequently ensures pathogen degradation by regulating pathogen-containing autophagosome maturation. May play a role in ruffle formation and actin cytoskeleton organization and seems to negatively regulate constitutive secretion. The polypeptide is Calcium-binding and coiled-coil domain-containing protein 2 (Xenopus tropicalis (Western clawed frog)).